Consider the following 129-residue polypeptide: Small ribosomal subunit protein uS9 (129 aa).

The protein belongs to the universal ribosomal protein uS9 family.

The sequence is that of Small ribosomal subunit protein uS9 (rpsI) from Helicobacter pylori (strain J99 / ATCC 700824) (Campylobacter pylori J99).